A 140-amino-acid polypeptide reads, in one-letter code: uncharacterized protein (140 aa).

This is an uncharacterized protein from Archaeoglobus fulgidus (strain ATCC 49558 / DSM 4304 / JCM 9628 / NBRC 100126 / VC-16).